The sequence spans 250 residues: MDYLSLSLTMIFVLIALFLSKSFKAGVEKDMIIATIRAAVQLLIIGYVLSLIFRGDHPVFILLMVLLMLAVAAQNVIKRKKNTIGSFWRVFAALAIVEIVTQGILLSLHIIPLTARYVIPISGMVIGNSMVLSSLFLNRLNSEVGVRKEEIQLILSLGGTPKQSIQRILTSAMKMSMIPTLESQKTLGLVQLPGMMTGQILAGADPIQAVRFQLLIVFTTMASAALTCVILSVLTYPSLFTVHQQLKQNE.

The next 6 helical transmembrane spans lie at 3–23, 32–52, 57–77, 91–111, 117–137, and 214–234; these read YLSLSLTMIFVLIALFLSKSF, IIATIRAAVQLLIIGYVLSLI, HPVFILLMVLLMLAVAAQNVI, FAALAIVEIVTQGILLSLHII, YVIPISGMVIGNSMVLSSLFL, and LLIVFTTMASAALTCVILSVL.

This sequence belongs to the UPF0014 family.

It is found in the cell membrane. In Bacillus subtilis (strain 168), this protein is UPF0014 membrane protein YjkA (yjkA).